The primary structure comprises 139 residues: Actin-depolymerizing factor 2 (139 aa).

The ADF-H domain occupies 7 to 139 (GLAVSDECKV…SLDIVKSRTN (133 aa)).

This sequence belongs to the actin-binding proteins ADF family. In terms of tissue distribution, expressed in pollen.

Its function is as follows. Actin-depolymerizing protein. Severs actin filaments (F-actin) and binds to actin monomers. In Zea mays (Maize), this protein is Actin-depolymerizing factor 2 (ADF2).